The sequence spans 292 residues: Porphobilinogen deaminase (292 aa).

Cys235 is modified (S-(dipyrrolylmethanemethyl)cysteine).

Belongs to the HMBS family. Monomer. The cofactor is dipyrromethane.

The enzyme catalyses 4 porphobilinogen + H2O = hydroxymethylbilane + 4 NH4(+). Its pathway is porphyrin-containing compound metabolism; protoporphyrin-IX biosynthesis; coproporphyrinogen-III from 5-aminolevulinate: step 2/4. Functionally, tetrapolymerization of the monopyrrole PBG into the hydroxymethylbilane pre-uroporphyrinogen in several discrete steps. The protein is Porphobilinogen deaminase of Acetivibrio thermocellus (strain ATCC 27405 / DSM 1237 / JCM 9322 / NBRC 103400 / NCIMB 10682 / NRRL B-4536 / VPI 7372) (Clostridium thermocellum).